We begin with the raw amino-acid sequence, 303 residues long: Elongation factor Ts (303 aa).

The involved in Mg(2+) ion dislocation from EF-Tu stretch occupies residues 81 to 84 (TDFV).

The protein belongs to the EF-Ts family.

Its subcellular location is the cytoplasm. Its function is as follows. Associates with the EF-Tu.GDP complex and induces the exchange of GDP to GTP. It remains bound to the aminoacyl-tRNA.EF-Tu.GTP complex up to the GTP hydrolysis stage on the ribosome. This Mesomycoplasma hyopneumoniae (strain 232) (Mycoplasma hyopneumoniae) protein is Elongation factor Ts.